Here is a 336-residue protein sequence, read N- to C-terminus: Mitochondrial import receptor subunit TOM40 homolog (336 aa).

A disordered region spans residues 1–58; that stretch reads MGNVLAASSPAPPPAGSPPVPGLVSVPPGFTMPPVAGLTPTPDKKEPQEERLPNPGTF. A compositionally biased stretch (pro residues) spans 10–21; it reads PAPPPAGSPPVP. Residues 42-52 are compositionally biased toward basic and acidic residues; that stretch reads PDKKEPQEERL.

It belongs to the Tom40 family. As to quaternary structure, forms part of the preprotein translocase complex of the outer mitochondrial membrane (TOM complex). Interacts with mitochondrial targeting sequences.

The protein resides in the mitochondrion outer membrane. Functionally, channel-forming protein essential for import of protein precursors into mitochondria. This is Mitochondrial import receptor subunit TOM40 homolog (tomm40) from Xenopus laevis (African clawed frog).